The chain runs to 398 residues: MSQKLVLILNCGSSSLKFAILDPVSGAEKLSGLAEAFYLPDARIKWKLNGEKGNADLGAGAAHSEALNFIVSTILTEDLKNSIAAIGHRVVHGGEKYTKSVVITDEVIQGIKDAAEFAPLHNPAHLIGIEEAFKAFPHLKDNNVAVFDTAFHQTMPEEAFLYALPYSLYKEHGVRRYGMHGTSHYFVSREAAKRLNIAEDKINVITCHLGNGASVAAIRQGKCIDTSMGFTPLEGLVMGTRSGDLDPAIIFYMHNTLGMSVAQIEETLVKKSGLLGLTEVTSDCRYSEDNYEKESAAKRALDVFCYRLAKYIGSYMAIIGENLDAIVFTGGIGENAALVRQITLNHLKLFGYKIDDEKNSAARFGNEGVITADNTPIAIVIPTNEELVIAQDTARLSF.

Asn-10 contacts Mg(2+). ATP is bound at residue Lys-17. Arg-89 provides a ligand contact to substrate. The active-site Proton donor/acceptor is Asp-148. ATP-binding positions include His-208 to Gly-212, Asp-283 to Arg-285, and Gly-331 to Asn-335. Glu-385 is a binding site for Mg(2+).

This sequence belongs to the acetokinase family. As to quaternary structure, homodimer. It depends on Mg(2+) as a cofactor. Mn(2+) serves as cofactor.

The protein localises to the cytoplasm. The catalysed reaction is acetate + ATP = acetyl phosphate + ADP. Its pathway is metabolic intermediate biosynthesis; acetyl-CoA biosynthesis; acetyl-CoA from acetate: step 1/2. In terms of biological role, catalyzes the formation of acetyl phosphate from acetate and ATP. Can also catalyze the reverse reaction. This Histophilus somni (strain 2336) (Haemophilus somnus) protein is Acetate kinase.